A 916-amino-acid chain; its full sequence is DNA ligase 1 (916 aa).

A compositionally biased stretch (polar residues) spans 1 to 10 (MQRSIMSFFQ). Residues 1 to 197 (MQRSIMSFFQ…SPESVTLTKT (197 aa)) are disordered. The span at 13–43 (KEGKAKKPEKETPSSIREKEPPPKVALKERN) shows a compositional bias: basic and acidic residues. Serine 49, serine 51, and serine 65 each carry phosphoserine. Threonine 77 bears the Phosphothreonine mark. Over residues 99–111 (PENSPVFNCSSPM) the composition is skewed to polar residues. The segment covering 119-129 (PKRRTARKQLP) has biased composition (basic residues). Lysine 144 bears the N6-acetyllysine mark. The span at 153–177 (KEEETPKESLAEAEDIKQKEEKEGD) shows a compositional bias: basic and acidic residues. Residues 185–197 (PTKSPESVTLTKT) are compositionally biased toward polar residues. Position 193 is a phosphothreonine (threonine 193). N6-acetyllysine is present on lysine 225. Phosphoserine occurs at positions 228 and 229. The residue at position 232 (threonine 232) is a Phosphothreonine. Residues 236–266 (PAVKTEVKQEESGTLRKEETKGTLDPANYNP) form a disordered region. Positions 238–257 (VKTEVKQEESGTLRKEETKG) are enriched in basic and acidic residues. The interval 447-456 (RLRLGLAEQS) is interaction with target DNA. Glutamate 564 contributes to the ATP binding site. The active-site N6-AMP-lysine intermediate is the lysine 566. Residues arginine 571 and glutamate 619 each coordinate ATP. Mg(2+) is bound at residue glutamate 619. The interval 640-642 (KRK) is interaction with target DNA. Residue glutamate 718 coordinates Mg(2+). Positions 723 and 742 each coordinate ATP. Phosphothreonine is present on threonine 796. Phosphoserine is present on residues serine 799, serine 906, serine 907, and serine 911. Residues 879–916 (DKQPEQATTSNQVASLYRKQSQIQNQQSSDLDSDVEDY) form a disordered region. The span at 883–908 (EQATTSNQVASLYRKQSQIQNQQSSD) shows a compositional bias: polar residues.

It belongs to the ATP-dependent DNA ligase family. Interacts with PCNA. Interacts with POLB. Mg(2+) is required as a cofactor.

The protein resides in the nucleus. It catalyses the reaction ATP + (deoxyribonucleotide)n-3'-hydroxyl + 5'-phospho-(deoxyribonucleotide)m = (deoxyribonucleotide)n+m + AMP + diphosphate.. Functionally, DNA ligase that seals nicks in double-stranded during DNA repair. Also involved in DNA replication and DNA recombination. This chain is DNA ligase 1 (Lig1), found in Mus musculus (Mouse).